Here is a 156-residue protein sequence, read N- to C-terminus: MNLNATLIGQLIAFALFVAFCMKFVWPPLIKAIEERQANIANALASAEKAKQEQADSKAAADQEILKAKEEAQKIIDLATKRRNEILESVQAEAEIERQRIIEQGHAEVESERKRVQEELRQKVAALAVAGAEKIVGRSVDQAANNDIIDKLVAEL.

The helical transmembrane segment at 7 to 27 (LIGQLIAFALFVAFCMKFVWP) threads the bilayer.

The protein belongs to the ATPase B chain family. In terms of assembly, F-type ATPases have 2 components, F(1) - the catalytic core - and F(0) - the membrane proton channel. F(1) has five subunits: alpha(3), beta(3), gamma(1), delta(1), epsilon(1). F(0) has three main subunits: a(1), b(2) and c(10-14). The alpha and beta chains form an alternating ring which encloses part of the gamma chain. F(1) is attached to F(0) by a central stalk formed by the gamma and epsilon chains, while a peripheral stalk is formed by the delta and b chains.

It is found in the cell inner membrane. F(1)F(0) ATP synthase produces ATP from ADP in the presence of a proton or sodium gradient. F-type ATPases consist of two structural domains, F(1) containing the extramembraneous catalytic core and F(0) containing the membrane proton channel, linked together by a central stalk and a peripheral stalk. During catalysis, ATP synthesis in the catalytic domain of F(1) is coupled via a rotary mechanism of the central stalk subunits to proton translocation. In terms of biological role, component of the F(0) channel, it forms part of the peripheral stalk, linking F(1) to F(0). The sequence is that of ATP synthase subunit b from Actinobacillus pleuropneumoniae serotype 7 (strain AP76).